Reading from the N-terminus, the 117-residue chain is MNTQKLFREITEEQFKSDVPAFRPGDTVRVHVKVVEGTRERIQIFEGVVIKRKGGGISETFTVRKISYGVGVERAFPLHSPRVAQIEVVRYGKVRRAKLYYLRNLRGKAARIKEIRR.

It belongs to the bacterial ribosomal protein bL19 family.

This protein is located at the 30S-50S ribosomal subunit interface and may play a role in the structure and function of the aminoacyl-tRNA binding site. The polypeptide is Large ribosomal subunit protein bL19 (Exiguobacterium sp. (strain ATCC BAA-1283 / AT1b)).